The chain runs to 439 residues: 3-phosphoshikimate 1-carboxyvinyltransferase (439 aa).

3-phosphoshikimate is bound by residues Lys-25, Ser-26, and Arg-30. Lys-25 provides a ligand contact to phosphoenolpyruvate. The phosphoenolpyruvate site is built by Gly-96 and Arg-124. Ser-170, Ser-171, Gln-172, Ser-202, Asp-324, and Lys-351 together coordinate 3-phosphoshikimate. Gln-172 lines the phosphoenolpyruvate pocket. The active-site Proton acceptor is Asp-324. Arg-355, Arg-399, and Lys-424 together coordinate phosphoenolpyruvate.

The protein belongs to the EPSP synthase family. As to quaternary structure, monomer.

It localises to the cytoplasm. It catalyses the reaction 3-phosphoshikimate + phosphoenolpyruvate = 5-O-(1-carboxyvinyl)-3-phosphoshikimate + phosphate. Its pathway is metabolic intermediate biosynthesis; chorismate biosynthesis; chorismate from D-erythrose 4-phosphate and phosphoenolpyruvate: step 6/7. In terms of biological role, catalyzes the transfer of the enolpyruvyl moiety of phosphoenolpyruvate (PEP) to the 5-hydroxyl of shikimate-3-phosphate (S3P) to produce enolpyruvyl shikimate-3-phosphate and inorganic phosphate. In Bordetella avium (strain 197N), this protein is 3-phosphoshikimate 1-carboxyvinyltransferase.